A 223-amino-acid polypeptide reads, in one-letter code: Sugar fermentation stimulation protein homolog (223 aa).

The protein belongs to the SfsA family.

In Thermosipho melanesiensis (strain DSM 12029 / CIP 104789 / BI429), this protein is Sugar fermentation stimulation protein homolog.